A 290-amino-acid polypeptide reads, in one-letter code: OTU domain-containing protein 6A (290 aa).

The segment at 27–117 (QTLKASVPKN…RRHQERMPAA (91 aa)) is disordered. The segment covering 49-68 (SRLEAEMEQRHKQELEKFGE) has biased composition (basic and acidic residues). The segment covering 95 to 108 (KAQKRRDRRAHQER) has biased composition (basic residues). The OTU domain occupies 142 to 276 (LEMKTIPADG…GEHYNSVKPI (135 aa)). Positions 147–153 (IPADGHC) are cys-loop. Aspartate 150 is a catalytic residue. Catalysis depends on cysteine 153, which acts as the Nucleophile. A variable-loop region spans residues 211 to 221 (IVHNASWGGQL). Residues 259-269 (YLHYACDFGEH) form a his-loop region. Residue histidine 269 is part of the active site.

The catalysed reaction is Thiol-dependent hydrolysis of ester, thioester, amide, peptide and isopeptide bonds formed by the C-terminal Gly of ubiquitin (a 76-residue protein attached to proteins as an intracellular targeting signal).. Deubiquitinating enzyme that hydrolyzes 'Lys-27'-, 'Lys-29'- and 'Lys-33'-linked polyubiquitin chains. Also able to hydrolyze 'Lys-11'-linked ubiquitin chains. The chain is OTU domain-containing protein 6A (Otud6a) from Mus musculus (Mouse).